A 211-amino-acid polypeptide reads, in one-letter code: Thymidylate kinase (211 aa).

Residue 7 to 14 (GIDGCGKT) coordinates ATP.

It belongs to the thymidylate kinase family.

The enzyme catalyses dTMP + ATP = dTDP + ADP. Its function is as follows. Phosphorylation of dTMP to form dTDP in both de novo and salvage pathways of dTTP synthesis. The polypeptide is Thymidylate kinase (Anaplasma marginale (strain Florida)).